A 312-amino-acid chain; its full sequence is tRNA dimethylallyltransferase (312 aa).

Residue 11–18 (GLTATGKT) coordinates ATP. A substrate-binding site is contributed by 13 to 18 (TATGKT). The tract at residues 36 to 39 (DSMC) is interaction with substrate tRNA.

The protein belongs to the IPP transferase family. In terms of assembly, monomer. It depends on Mg(2+) as a cofactor.

The catalysed reaction is adenosine(37) in tRNA + dimethylallyl diphosphate = N(6)-dimethylallyladenosine(37) in tRNA + diphosphate. Functionally, catalyzes the transfer of a dimethylallyl group onto the adenine at position 37 in tRNAs that read codons beginning with uridine, leading to the formation of N6-(dimethylallyl)adenosine (i(6)A). In Caldicellulosiruptor bescii (strain ATCC BAA-1888 / DSM 6725 / KCTC 15123 / Z-1320) (Anaerocellum thermophilum), this protein is tRNA dimethylallyltransferase.